A 21-amino-acid chain; its full sequence is Endo-1,4-beta-xylanase A (21 aa).

Belongs to the glycosyl hydrolase 10 (cellulase F) family.

The enzyme catalyses Endohydrolysis of (1-&gt;4)-beta-D-xylosidic linkages in xylans.. Its pathway is glycan degradation; xylan degradation. This chain is Endo-1,4-beta-xylanase A, found in Dictyoglomus sp. (strain B4A).